The chain runs to 151 residues: 3-hydroxyacyl-[acyl-carrier-protein] dehydratase FabZ (151 aa).

H54 is an active-site residue.

It belongs to the thioester dehydratase family. FabZ subfamily.

The protein localises to the cytoplasm. It carries out the reaction a (3R)-hydroxyacyl-[ACP] = a (2E)-enoyl-[ACP] + H2O. In terms of biological role, involved in unsaturated fatty acids biosynthesis. Catalyzes the dehydration of short chain beta-hydroxyacyl-ACPs and long chain saturated and unsaturated beta-hydroxyacyl-ACPs. This Salmonella agona (strain SL483) protein is 3-hydroxyacyl-[acyl-carrier-protein] dehydratase FabZ.